The following is a 165-amino-acid chain: Large ribosomal subunit protein uL22c (165 aa).

This sequence belongs to the universal ribosomal protein uL22 family. Part of the 50S ribosomal subunit.

The protein localises to the plastid. It is found in the chloroplast. Functionally, this protein binds specifically to 23S rRNA. Its function is as follows. The globular domain of the protein is located near the polypeptide exit tunnel on the outside of the subunit, while an extended beta-hairpin is found that lines the wall of the exit tunnel in the center of the 70S ribosome. The polypeptide is Large ribosomal subunit protein uL22c (rpl22) (Daucus carota (Wild carrot)).